The following is an 81-amino-acid chain: Small ribosomal subunit protein bS16 (81 aa).

Belongs to the bacterial ribosomal protein bS16 family.

This chain is Small ribosomal subunit protein bS16, found in Clostridium perfringens (strain ATCC 13124 / DSM 756 / JCM 1290 / NCIMB 6125 / NCTC 8237 / Type A).